Reading from the N-terminus, the 477-residue chain is 23S rRNA (uracil(1939)-C(5))-methyltransferase RlmD (477 aa).

The 60-residue stretch at 7–66 folds into the TRAM domain; it reads KTENFPPDWLLVESLDLEAQGVAHRADGKVVFIKGALPFELVSANVHRKKNNWEQGVVTA. Residues cysteine 79, cysteine 89, cysteine 92, and cysteine 171 each coordinate [4Fe-4S] cluster. S-adenosyl-L-methionine-binding residues include glutamine 280, phenylalanine 309, asparagine 314, glutamate 330, asparagine 365, and aspartate 386. Cysteine 432 serves as the catalytic Nucleophile.

The protein belongs to the class I-like SAM-binding methyltransferase superfamily. RNA M5U methyltransferase family. RlmD subfamily.

The catalysed reaction is uridine(1939) in 23S rRNA + S-adenosyl-L-methionine = 5-methyluridine(1939) in 23S rRNA + S-adenosyl-L-homocysteine + H(+). Functionally, catalyzes the formation of 5-methyl-uridine at position 1939 (m5U1939) in 23S rRNA. The polypeptide is 23S rRNA (uracil(1939)-C(5))-methyltransferase RlmD (Albidiferax ferrireducens (strain ATCC BAA-621 / DSM 15236 / T118) (Rhodoferax ferrireducens)).